A 140-amino-acid chain; its full sequence is Active regulator of SIRT1 (140 aa).

2 disordered regions span residues 1–52 (MSAS…KNKA) and 95–123 (QQVL…EGTV). The span at 108–120 (DRPAEKKEKKKPE) shows a compositional bias: basic and acidic residues.

The protein belongs to the AROS family. In terms of assembly, part of the small subunit (SSU) processome, composed of more than 70 proteins and the RNA chaperone small nucleolar RNA (snoRNA) U3.

It localises to the nucleus. Its subcellular location is the nucleolus. Functionally, part of the small subunit (SSU) processome, first precursor of the small eukaryotic ribosomal subunit. During the assembly of the SSU processome in the nucleolus, many ribosome biogenesis factors, an RNA chaperone and ribosomal proteins associate with the nascent pre-rRNA and work in concert to generate RNA folding, modifications, rearrangements and cleavage as well as targeted degradation of pre-ribosomal RNA by the RNA exosome. Acts as a chaperone that specifically mediates the integration of RPS19 in state post-A1. Direct regulator of SIRT1. The polypeptide is Active regulator of SIRT1 (RPS19BP1) (Gallus gallus (Chicken)).